The primary structure comprises 545 residues: MSYSIGIDYGTASGRVFLINTTNGQVVSKFVKPYTHGVIESELNGLKIPHTYALQNSNDYLEIMEEGISYIVRESKIDPDNIVGIGIDFTSSTIIFTDENLNPVHNLKQFKNNPHAYVKLWKHHGAYKEAEKLYQTAIENNNKWLGHYGYNVSSEWMIPKIMEVMNRAPEIMEKTAYIMEAGDWIVNKLTNKNIRSNCGLGFKAFWEEETGFHYDLFDKIDPKLSKVIQDKVSAPVVNIGEAVGKLDDKMAQKLGLSKETMVSPFIIDAHASLLGIGSEKDKEMTMVMGTSTCHLMLNEKQHQVPGISGSVKGAIIPELFAYEAGQSAVGDLFEYVAKQAPKSYVDEAANRNMTVFELMNEKIKHQMPGESGLIALDWHNGNRSVLSDSNLTGCIFGLTLQTKHEDIYRAYLEATAFGTKMIMQQYQDWHMEVEKVFACGGIPKKNAVMMDIYANVLNKKLIVMDSEYAPAIGAAILGAVSGGAHNSINDAVDAMKEPILYEINPEAEKVQRYETLFKAYKALHDIHGYKKANIMKDIQSLRVEG.

Belongs to the ribulokinase family.

It carries out the reaction D-ribulose + ATP = D-ribulose 5-phosphate + ADP + H(+). The catalysed reaction is L-ribulose + ATP = L-ribulose 5-phosphate + ADP + H(+). Its pathway is carbohydrate degradation; L-arabinose degradation via L-ribulose; D-xylulose 5-phosphate from L-arabinose (bacterial route): step 2/3. This chain is Ribulokinase, found in Staphylococcus aureus (strain MSSA476).